The following is a 259-amino-acid chain: Small ribosomal subunit protein eS1 (259 aa).

Residues 1–18 are compositionally biased toward basic residues; the sequence is MAVGKNKRISKGKKGGKK. The segment at 1-22 is disordered; that stretch reads MAVGKNKRISKGKKGGKKKASD.

The protein belongs to the eukaryotic ribosomal protein eS1 family. In terms of assembly, component of the small ribosomal subunit. Mature ribosomes consist of a small (40S) and a large (60S) subunit. The 40S subunit contains about 33 different proteins and 1 molecule of RNA (18S). The 60S subunit contains about 49 different proteins and 3 molecules of RNA (25S, 5.8S and 5S).

The protein resides in the cytoplasm. The chain is Small ribosomal subunit protein eS1 from Chlamydomonas reinhardtii (Chlamydomonas smithii).